A 294-amino-acid chain; its full sequence is Protein RarD (294 aa).

Topologically, residues 1–11 (MDAKQTRQGVL) are cytoplasmic. A helical membrane pass occupies residues 12 to 34 (LALAAYFIWGIAPAYFKLIYYVP). Residues 18-145 (FIWGIAPAYF…AVCGVLVQLW (128 aa)) form the EamA domain. Topologically, residues 35–37 (ADE) are periplasmic. A helical transmembrane segment spans residues 38–60 (ILTHRVIWSFFFMVALLSVSRQW). Residues 61 to 72 (RQVKRLLKTPKK) lie on the Cytoplasmic side of the membrane. The chain crosses the membrane as a helical span at residues 73–95 (IFLLALSAVLVGGNWLLFIWAVN). The Periplasmic portion of the chain corresponds to 96–99 (NHHM). Residues 100-122 (LEASLGYFINPLVNILLGMIFLG) traverse the membrane as a helical segment. Residues 123–128 (ERFRRM) lie on the Cytoplasmic side of the membrane. Residues 129-146 (QWLAVILAVCGVLVQLWT) traverse the membrane as a helical segment. Residues 147–149 (FGS) are Periplasmic-facing. Residues 150–167 (LPIIALGLAFSFAFYGLV) form a helical membrane-spanning segment. Topologically, residues 168–179 (RKKIAVEAQTGM) are cytoplasmic. A helical membrane pass occupies residues 180 to 197 (LVETLWLLPVAAIYLFSI). Over 198-211 (ADSATSHMGQNALS) the chain is Periplasmic. The helical transmembrane segment at 212-234 (LNLLLMAAGVVTTIPLLCFTGAA) threads the bilayer. Topologically, residues 235-238 (TRLR) are cytoplasmic. A helical membrane pass occupies residues 239-261 (LSTLGFFQYIGPTLMFLLAVTFY). Over 262–270 (GEVPGADKM) the chain is Periplasmic. Residues 271–290 (VTFAFIWVALAIFVMDAIYT) traverse the membrane as a helical segment. At 291-294 (QRKK) the chain is on the cytoplasmic side.

This sequence belongs to the EamA transporter family.

The protein resides in the cell inner membrane. The protein is Protein RarD (rarD) of Salmonella typhi.